Consider the following 103-residue polypeptide: Conantokin R1-A (103 aa).

The N-terminal stretch at 1 to 21 is a signal peptide; it reads MQLYTYLYLLVPLVTFHLILG. A propeptide spanning residues 22-79 is cleaved from the precursor; it reads TGTLDHGGALTERRSTDATALKPEPVLQKSAARSTDDNGKDRLTQMKRILKKRGNNPR. Residues 34-83 form a disordered region; it reads RRSTDATALKPEPVLQKSAARSTDDNGKDRLTQMKRILKKRGNNPRADEE. Residues 55 to 65 show a composition bias toward basic and acidic residues; the sequence is STDDNGKDRLT. 3 positions are modified to 4-carboxyglutamate: Glu-82, Glu-83, and Glu-89.

It belongs to the conotoxin B superfamily. The cofactor is Ca(2+). Requires Mg(2+) as cofactor. In terms of tissue distribution, expressed by the venom duct.

The protein resides in the secreted. Conantokins inhibit N-methyl-D-aspartate (NMDA) receptors. This toxin has the highest potency for the NR2B/GRIN2B subunit (IC(50)=0.11 uM), followed by NR2D/GRIN2D (IC(50)=0.48 uM), NR2A/GRIN2A (IC(50)=2.1 uM), and NR2C/GRIN2C (IC(50)=6.1 uM) subunits when tested on rat receptors. This Conus rolani (Cone snail) protein is Conantokin R1-A.